We begin with the raw amino-acid sequence, 531 residues long: Flavin-containing monooxygenase 3 (531 aa).

Residues 9–13, glutamate 32, 40–41, and 61–62 each bind FAD; these read GAGIS, LW, and NS. Residues 60–61 and 195–198 each bind NADP(+); these read TN and SGCD. Residues 511–531 form a helical membrane-spanning segment; that stretch reads FSPWLKLLAIAVLLIAAVLVF.

This sequence belongs to the FMO family. FAD is required as a cofactor. As to expression, liver.

The protein localises to the microsome membrane. It localises to the endoplasmic reticulum membrane. It catalyses the reaction trimethylamine + NADPH + O2 = trimethylamine N-oxide + NADP(+) + H2O. The catalysed reaction is N,N-dimethylaniline + NADPH + O2 + H(+) = N,N-dimethylaniline N-oxide + NADP(+) + H2O. The enzyme catalyses hypotaurine + NADPH + O2 + H(+) = taurine + NADP(+) + H2O. It carries out the reaction (S)-nicotine + NADPH + O2 = trans-(S)-nicotine N(1')-oxide + NADP(+) + H2O. It catalyses the reaction albendazole + NADPH + O2 + H(+) = albendazole S-oxide + NADP(+) + H2O. In terms of biological role, essential hepatic enzyme that catalyzes the oxygenation of a wide variety of nitrogen- and sulfur-containing compounds including drugs as well as dietary compounds. Plays an important role in the metabolism of trimethylamine (TMA), via the production of trimethylamine N-oxide (TMAO) metabolite. TMA is generated by the action of gut microbiota using dietary precursors such as choline, choline containing compounds, betaine or L-carnitine. By regulating TMAO concentration, FMO3 directly impacts both platelet responsiveness and rate of thrombus formation. The chain is Flavin-containing monooxygenase 3 (FMO3) from Oryctolagus cuniculus (Rabbit).